A 392-amino-acid polypeptide reads, in one-letter code: Chorismate synthase (392 aa).

NADP(+) contacts are provided by arginine 39 and arginine 45. Residues 128–130 (RSS), 248–249 (QA), glycine 300, 315–319 (KPIPT), and arginine 341 each bind FMN.

This sequence belongs to the chorismate synthase family. Homotetramer. FMNH2 serves as cofactor.

The enzyme catalyses 5-O-(1-carboxyvinyl)-3-phosphoshikimate = chorismate + phosphate. The protein operates within metabolic intermediate biosynthesis; chorismate biosynthesis; chorismate from D-erythrose 4-phosphate and phosphoenolpyruvate: step 7/7. Functionally, catalyzes the anti-1,4-elimination of the C-3 phosphate and the C-6 proR hydrogen from 5-enolpyruvylshikimate-3-phosphate (EPSP) to yield chorismate, which is the branch point compound that serves as the starting substrate for the three terminal pathways of aromatic amino acid biosynthesis. This reaction introduces a second double bond into the aromatic ring system. In Trichlorobacter lovleyi (strain ATCC BAA-1151 / DSM 17278 / SZ) (Geobacter lovleyi), this protein is Chorismate synthase.